We begin with the raw amino-acid sequence, 304 residues long: MHQDHLLSTTQLSREDIETILDRAAAIEMNPDGWEAQYSGTVLGLCFFEPSTRTRMSFDAAMKRLGGRTIDMGSVDNSSISKGETLADTVRVIAGYADAIVLRHPSEGAAKLAAEFVDIPVINAGDGAGQHPTQTLLDLYTMRENVGLDEITVGIAGDLKYGRTVHSLAAALSNFDVRQHFISPESLQLPRNIRYDLHDSGSQVREHTDIESILPELDVLYVTRIQRERFPDENEYQRVAGQYRVDTDILSHADNNLTVMHPLPRVDEIAPEVDTTEHAAYFEQAHNGVPVRMALLDALIGRAK.

Carbamoyl phosphate contacts are provided by arginine 53 and threonine 54. Lysine 82 lines the L-aspartate pocket. Carbamoyl phosphate is bound by residues arginine 103, histidine 131, and glutamine 134. L-aspartate is bound by residues arginine 163 and arginine 224. Leucine 263 and proline 264 together coordinate carbamoyl phosphate.

Belongs to the aspartate/ornithine carbamoyltransferase superfamily. ATCase family. As to quaternary structure, heterooligomer of catalytic and regulatory chains.

It carries out the reaction carbamoyl phosphate + L-aspartate = N-carbamoyl-L-aspartate + phosphate + H(+). The protein operates within pyrimidine metabolism; UMP biosynthesis via de novo pathway; (S)-dihydroorotate from bicarbonate: step 2/3. Catalyzes the condensation of carbamoyl phosphate and aspartate to form carbamoyl aspartate and inorganic phosphate, the committed step in the de novo pyrimidine nucleotide biosynthesis pathway. The chain is Aspartate carbamoyltransferase catalytic subunit from Haloquadratum walsbyi (strain DSM 16790 / HBSQ001).